The sequence spans 194 residues: Transmembrane protein 212 (194 aa).

Helical transmembrane passes span 11 to 31 (ILVT…FPVF), 44 to 64 (IACP…LLLA), 76 to 96 (ATFT…AIAL), 99 to 119 (ALLG…NYLG), and 148 to 168 (LQAL…TVFI).

It localises to the membrane. The polypeptide is Transmembrane protein 212 (TMEM212) (Homo sapiens (Human)).